A 136-amino-acid chain; its full sequence is Diuretic hormone 41 (136 aa).

The first 26 residues, 1 to 26 (MMWWAVWCAAMVAGSVFTAAAPPTDS), serve as a signal peptide directing secretion. The propeptide occupies 27 to 76 (IDLMQMDPSLADDESLGFAMQSLSGRYAAAPWLYLLADVSHDPQNGSDRV). Position 119 is an isoleucine amide (I119). Residues 123–136 (GFHWAPSAKAAKFY) constitute a propeptide that is removed on maturation.

Belongs to the sauvagine/corticotropin-releasing factor/urotensin I family.

The protein localises to the secreted. Regulation of fluid secretion. The chain is Diuretic hormone 41 (dh41) from Bombyx mori (Silk moth).